The following is an 860-amino-acid chain: MDGIHHGGHGRARPSHPMAFPDFDADSHMMSDDFSLDTPFSPSGSSNANDTVLGNSIFPEWTNGVSRGDSPDEMQRKDPLGAQIWKLYTRTKSQLPNQERMENLTWRMMAMNLKRKEREQQARASETLSPTPSGIAQMRLSDQPSPAGGDLAHDTTSDPMNLDDFIVPFDSPAEHSSHPIDRHFTATPTGSIPIKSRKDHAMMDSSTAASFPHPPQDQRTNSEFGYVARRVRKTSVDDRQFFAGLSVPTRKRPAEASPQVPPVSNAMMAQHSELSSALPDYSLDHPPSAYALSGNGTVGPRRPQHHHTHSNIPYGLDTYGISENHGLNSAGSYQQNFHFSPSDSPMTAGNPFSSLYAQTPLASSLNSTEFFSPPPSGYQSTVSTPQPIYEGEQSIFFSDAPSAESHTQRRIPNYIQQRQSNLSASLQPRYMYNMSNGESHSGSAVTGPPTTHVSGFSVPPPQHINPSQVLGHGEFSTTAPSSSMFTFGGDSDNEDDDGNFGEGGGMTMPNDFASLDESGDMSAGLHWDGGFPGSIHSLPGFNAQHRKHVTIGSTDMIDGPPEWNQGGTLGRAHGSAASVSEVRNQNQDPRRYGKVPRTASTPNAAALLRQSLNGSASGPPTNHPSPSTPPESGLSSAVPSRPGSPGGSKNGDPNAGPTTCTNCFTQTTPLWRRNPEGQPLCNACGLFLKLHGVVRPLSLKTDVIKKRNRSSASTLAVGTSRSSKKSSRKNSIQHAPSTSISSRMNTSESPPSMNGSSSLGKTGVVPIAAAPPKSGPPAGVAQARAGVQVAPRRQRRLEKAPTGSDPDAKDSPKSAAPPSRSKVLPLAPAMAPPAAANPANHNIAGGQGASQEWEWLTMSL.

The span at 1–14 shows a compositional bias: basic residues; sequence MDGIHHGGHGRARP. Disordered stretches follow at residues 1-24, 116-159, 174-193, 559-600, and 612-658; these read MDGI…PDFD, KERE…TSDP, EHSS…GSIP, GPPE…RTAS, and LNGS…AGPT. A compositionally biased stretch (polar residues) spans 122–144; the sequence is ARASETLSPTPSGIAQMRLSDQP. The segment covering 174–184 has biased composition (basic and acidic residues); the sequence is EHSSHPIDRHF. Polar residues predominate over residues 577–587; sequence ASVSEVRNQNQ. The GATA-type zinc-finger motif lies at 660–684; sequence CTNCFTQTTPLWRRNPEGQPLCNAC. The segment at 706–850 is disordered; the sequence is KRNRSSASTL…HNIAGGQGAS (145 aa). Composition is skewed to polar residues over residues 710-719 and 732-746; these read SSASTLAVGT and IQHA…RMNT. 3 stretches are compositionally biased toward low complexity: residues 747-758, 766-791, and 813-840; these read SESPPSMNGSSS, PIAA…QVAP, and KSAA…NPAN.

Its subcellular location is the nucleus. Functionally, major nitrogen regulatory protein. The protein is Nitrogen regulatory protein areA (AREA) of Penicillium roqueforti.